We begin with the raw amino-acid sequence, 253 residues long: Chitooligosaccharide deacetylase (253 aa).

2 residues coordinate Mg(2+): histidine 61 and histidine 126.

The protein belongs to the YdjC deacetylase family. ChbG subfamily. In terms of assembly, homodimer. Mg(2+) is required as a cofactor.

It localises to the cytoplasm. It catalyses the reaction N,N'-diacetylchitobiose + H2O = N-acetyl-beta-D-glucosaminyl-(1-&gt;4)-D-glucosamine + acetate. It carries out the reaction diacetylchitobiose-6'-phosphate + H2O = N'-monoacetylchitobiose-6'-phosphate + acetate. It functions in the pathway glycan degradation; chitin degradation. In terms of biological role, involved in the degradation of chitin. ChbG is essential for growth on the acetylated chitooligosaccharides chitobiose and chitotriose but is dispensable for growth on cellobiose and chitosan dimer, the deacetylated form of chitobiose. Deacetylation of chitobiose-6-P and chitotriose-6-P is necessary for both the activation of the chb promoter by the regulatory protein ChbR and the hydrolysis of phosphorylated beta-glucosides by the phospho-beta-glucosidase ChbF. Catalyzes the removal of only one acetyl group from chitobiose-6-P to yield monoacetylchitobiose-6-P, the inducer of ChbR and the substrate of ChbF. This is Chitooligosaccharide deacetylase from Yersinia pseudotuberculosis serotype O:1b (strain IP 31758).